The sequence spans 466 residues: MLVVGMSHRSAPVALLERLSMDDSVRGQTTSALVERPSLSEALIVSTCNRLEVYTVTSSFHTGVNDVVEVLHEISGVDIETLRGYLYVRYADAAAEHMLVVASGLDSMVVGEQQIIGQVRTAYQQATEAGTVGPALHALAQTALHTGKRVHTETDIDEAGASMVSFAIDRALTQMGIDPASDKPLAGKTALVLGAGAMSSLAATHLGREGVDKLIMANRTRERAERLASHSLEAGVPAEVVDFADRASVLDRVDMVVSATGADDFTVKPADIPAGVQLMLVDLSMPRDIDDACAEVPGVDLVNIERLHRAKREDPTGAAAEGADALAIVREELEAFTSEQRIRDVVPAVSALRKRANELLLDELDRLQARTPDISQEDWKEVTRTVRRVMDKFLHEPTVRVKKLAARSGSVSYESALQELFGLEAVQTTAPPAITSVNASDLPDAGIVAIVNSPSTTGQSVSVDGS.

Substrate-binding positions include 47-50 (TCNR), S107, 112-114 (EQQ), and Q118. The active-site Nucleophile is C48. Residue 194–199 (GAGAMS) participates in NADP(+) binding.

The protein belongs to the glutamyl-tRNA reductase family. In terms of assembly, homodimer.

The catalysed reaction is (S)-4-amino-5-oxopentanoate + tRNA(Glu) + NADP(+) = L-glutamyl-tRNA(Glu) + NADPH + H(+). Its pathway is porphyrin-containing compound metabolism; protoporphyrin-IX biosynthesis; 5-aminolevulinate from L-glutamyl-tRNA(Glu): step 1/2. Catalyzes the NADPH-dependent reduction of glutamyl-tRNA(Glu) to glutamate 1-semialdehyde (GSA). The protein is Glutamyl-tRNA reductase of Corynebacterium efficiens (strain DSM 44549 / YS-314 / AJ 12310 / JCM 11189 / NBRC 100395).